The following is a 273-amino-acid chain: 2,3,4,5-tetrahydropyridine-2,6-dicarboxylate N-succinyltransferase (273 aa).

The substrate site is built by Arg-104 and Asp-141.

It belongs to the transferase hexapeptide repeat family. As to quaternary structure, homotrimer.

It is found in the cytoplasm. The enzyme catalyses (S)-2,3,4,5-tetrahydrodipicolinate + succinyl-CoA + H2O = (S)-2-succinylamino-6-oxoheptanedioate + CoA. It participates in amino-acid biosynthesis; L-lysine biosynthesis via DAP pathway; LL-2,6-diaminopimelate from (S)-tetrahydrodipicolinate (succinylase route): step 1/3. The protein is 2,3,4,5-tetrahydropyridine-2,6-dicarboxylate N-succinyltransferase of Neisseria meningitidis serogroup C (strain 053442).